We begin with the raw amino-acid sequence, 399 residues long: Acetate kinase (399 aa).

Asparagine 7 provides a ligand contact to Mg(2+). Lysine 14 is an ATP binding site. Arginine 90 lines the substrate pocket. The active-site Proton donor/acceptor is aspartate 147. Residues 207–211 (HLGNG), 282–284 (DFR), and 330–334 (GIGEN) each bind ATP. Glutamate 385 contributes to the Mg(2+) binding site.

This sequence belongs to the acetokinase family. Homodimer. It depends on Mg(2+) as a cofactor. Requires Mn(2+) as cofactor.

The protein localises to the cytoplasm. The catalysed reaction is acetate + ATP = acetyl phosphate + ADP. It participates in metabolic intermediate biosynthesis; acetyl-CoA biosynthesis; acetyl-CoA from acetate: step 1/2. Its function is as follows. Catalyzes the formation of acetyl phosphate from acetate and ATP. Can also catalyze the reverse reaction. The sequence is that of Acetate kinase from Caldicellulosiruptor saccharolyticus (strain ATCC 43494 / DSM 8903 / Tp8T 6331).